The primary structure comprises 171 residues: Macro domain-containing protein RSc0334 (171 aa).

The Macro domain occupies 1–171; it reads MPIPTVTLRA…LYETALNEAR (171 aa).

The protein belongs to the MacroD-type family.

The protein is Macro domain-containing protein RSc0334 of Ralstonia nicotianae (strain ATCC BAA-1114 / GMI1000) (Ralstonia solanacearum).